We begin with the raw amino-acid sequence, 552 residues long: MSYGGYSGGSGRGGSYGGGRGGYGGGSSSYGNGGSSYGGGSSYGGGSSYGNGGGGYGGGYGGGYGGGDRMSNLGSNLGAVDWNSVNLVPFEKNFYVEDPRVSNRSDSEVQQYRASKQMTIQGQNVPKPVTSFDEAGFPDYILSEIKKMGFSEPSAIQSQAWPMALSGRDLVAIAETGSGKTIGFALPAMVHINAQPLLKPGDGPIALILAPTRELANQIQVECNRFGGSSRLRTCAVYGGVPKGPQIRDLQRGAEICIATPGRLIDMVDAGKTNLRRVTYLVMDEADRMLDMGFEPQIRKILQQIRPDRQTLMFSATWPKEVQRLAGDFLNNYAQVNIGSTELAANHNVKQIIEVCTEFEKKGKLIGHLETISAENGKVIIFTSTKRVADDLTKFLRQDGWPALAIHGDKQQQERDWVLAEFKSGRSPIMVATAVASRGLDVKDISYVINYDFPTNTEDYVHQIGRTGRAGRTGTAYTYFTPENSKSARELIGILREAKQEIPREIEEMGRFGGGGGGRGFRGGRGRGRGRGGYGGGGRTGANSFAVGNSRW.

The tract at residues 1–37 is disordered; sequence MSYGGYSGGSGRGGSYGGGRGGYGGGSSSYGNGGSSY. Residues 130–158 carry the Q motif motif; the sequence is TSFDEAGFPDYILSEIKKMGFSEPSAIQS. One can recognise a Helicase ATP-binding domain in the interval 161–336; the sequence is WPMALSGRDL…GDFLNNYAQV (176 aa). ATP is bound at residue 174–181; it reads AETGSGKT. Residues 284 to 287 carry the DEAD box motif; sequence DEAD. Positions 364–510 constitute a Helicase C-terminal domain; sequence KLIGHLETIS…EIPREIEEMG (147 aa). The disordered stretch occupies residues 508–552; the sequence is EMGRFGGGGGGRGFRGGRGRGRGRGGYGGGGRTGANSFAVGNSRW. 2 stretches are compositionally biased toward gly residues: residues 511–521 and 531–540; these read RFGGGGGGRGF and RGGYGGGGRT. Residues 517-537 are RNA-binding RGG-box; that stretch reads GGRGFRGGRGRGRGRGGYGGG. Residues 542–552 are compositionally biased toward polar residues; sequence ANSFAVGNSRW.

This sequence belongs to the DEAD box helicase family. DDX5/DBP2 subfamily. As to quaternary structure, associates with polysomes.

Its subcellular location is the cytoplasm. The protein resides in the nucleus. The enzyme catalyses ATP + H2O = ADP + phosphate + H(+). Its function is as follows. ATP-dependent RNA helicase involved nonsense-mediated mRNA decay and ribosome biogenesis through rRNA processing. The chain is ATP-dependent RNA helicase DBP2 (DBP2) from Mycosarcoma maydis (Corn smut fungus).